The following is a 216-amino-acid chain: ATP-dependent Clp protease proteolytic subunit (216 aa).

Ser101 acts as the Nucleophile in catalysis. His126 is a catalytic residue.

Belongs to the peptidase S14 family. Component of the chloroplastic Clp protease core complex.

The protein localises to the plastid. It localises to the chloroplast stroma. It catalyses the reaction Hydrolysis of proteins to small peptides in the presence of ATP and magnesium. alpha-casein is the usual test substrate. In the absence of ATP, only oligopeptides shorter than five residues are hydrolyzed (such as succinyl-Leu-Tyr-|-NHMec, and Leu-Tyr-Leu-|-Tyr-Trp, in which cleavage of the -Tyr-|-Leu- and -Tyr-|-Trp bonds also occurs).. Cleaves peptides in various proteins in a process that requires ATP hydrolysis. Has a chymotrypsin-like activity. Plays a major role in the degradation of misfolded proteins. The polypeptide is ATP-dependent Clp protease proteolytic subunit (Triticum aestivum (Wheat)).